Reading from the N-terminus, the 278-residue chain is Putative phosphoenolpyruvate synthase regulatory protein (278 aa).

157–164 (GVSRSGKT) serves as a coordination point for ADP.

The protein belongs to the pyruvate, phosphate/water dikinase regulatory protein family. PSRP subfamily.

It catalyses the reaction [pyruvate, water dikinase] + ADP = [pyruvate, water dikinase]-phosphate + AMP + H(+). The catalysed reaction is [pyruvate, water dikinase]-phosphate + phosphate + H(+) = [pyruvate, water dikinase] + diphosphate. In terms of biological role, bifunctional serine/threonine kinase and phosphorylase involved in the regulation of the phosphoenolpyruvate synthase (PEPS) by catalyzing its phosphorylation/dephosphorylation. This Vibrio parahaemolyticus serotype O3:K6 (strain RIMD 2210633) protein is Putative phosphoenolpyruvate synthase regulatory protein.